The following is a 447-amino-acid chain: Argininosuccinate synthase (447 aa).

ATP contacts are provided by residues 17-25 (AFSGGLDTS) and Ala-43. Position 99 (Tyr-99) interacts with L-citrulline. ATP is bound by residues Gly-129 and Thr-131. Residues Thr-131, Asn-135, and Asp-136 each contribute to the L-aspartate site. Asn-135 contributes to the L-citrulline binding site. An ATP-binding site is contributed by Asp-136. Residues Arg-139 and Ser-192 each coordinate L-citrulline. Asp-194 serves as a coordination point for ATP. L-citrulline-binding residues include Thr-201, Glu-203, and Glu-280.

This sequence belongs to the argininosuccinate synthase family. Type 2 subfamily. As to quaternary structure, homotetramer.

It is found in the cytoplasm. It catalyses the reaction L-citrulline + L-aspartate + ATP = 2-(N(omega)-L-arginino)succinate + AMP + diphosphate + H(+). It functions in the pathway amino-acid biosynthesis; L-arginine biosynthesis; L-arginine from L-ornithine and carbamoyl phosphate: step 2/3. The polypeptide is Argininosuccinate synthase (Janthinobacterium sp. (strain Marseille) (Minibacterium massiliensis)).